Reading from the N-terminus, the 150-residue chain is Cytochrome c-type biogenesis protein CcmE (150 aa).

At 1 to 7 the chain is on the cytoplasmic side; sequence MTRKQKR. Residues 8–28 form a helical; Signal-anchor for type II membrane protein membrane-spanning segment; it reads LAIIGGGVGFLTAAVLLVMFA. At 29-150 the chain is on the periplasmic side; the sequence is FSQAVAYFYV…VTLGGEENIR (122 aa). Residues H123 and Y127 each contribute to the heme site.

Belongs to the CcmE/CycJ family.

Its subcellular location is the cell inner membrane. Its function is as follows. Heme chaperone required for the biogenesis of c-type cytochromes. Transiently binds heme delivered by CcmC and transfers the heme to apo-cytochromes in a process facilitated by CcmF and CcmH. The chain is Cytochrome c-type biogenesis protein CcmE from Sinorhizobium medicae (strain WSM419) (Ensifer medicae).